A 396-amino-acid chain; its full sequence is Elongation factor Tu (396 aa).

Residues 10–206 (KPHCNIGTIG…AVDEFIPQPT (197 aa)) enclose the tr-type G domain. The tract at residues 19–26 (GHVDHGKT) is G1. 19 to 26 (GHVDHGKT) contacts GTP. A Mg(2+)-binding site is contributed by Thr-26. Residues 60–64 (GITIS) form a G2 region. The segment at 81-84 (DCPG) is G3. Residues 81–85 (DCPGH) and 136–139 (NKVD) each bind GTP. A G4 region spans residues 136–139 (NKVD). The G5 stretch occupies residues 174–176 (SAL).

The protein belongs to the TRAFAC class translation factor GTPase superfamily. Classic translation factor GTPase family. EF-Tu/EF-1A subfamily. Monomer.

It is found in the cytoplasm. The catalysed reaction is GTP + H2O = GDP + phosphate + H(+). GTP hydrolase that promotes the GTP-dependent binding of aminoacyl-tRNA to the A-site of ribosomes during protein biosynthesis. This Pelagibacter ubique (strain HTCC1062) protein is Elongation factor Tu.